The chain runs to 307 residues: F-box protein At5g03100 (307 aa).

An F-box domain is found at 8–54 (VDFISSLPDEILHHILANTPTKLAIRTSVLSKRWKHVWYETPSISIV).

The sequence is that of F-box protein At5g03100 from Arabidopsis thaliana (Mouse-ear cress).